The primary structure comprises 181 residues: ATP synthase subunit delta (181 aa).

This sequence belongs to the ATPase delta chain family. F-type ATPases have 2 components, F(1) - the catalytic core - and F(0) - the membrane proton channel. F(1) has five subunits: alpha(3), beta(3), gamma(1), delta(1), epsilon(1). F(0) has three main subunits: a(1), b(2) and c(10-14). The alpha and beta chains form an alternating ring which encloses part of the gamma chain. F(1) is attached to F(0) by a central stalk formed by the gamma and epsilon chains, while a peripheral stalk is formed by the delta and b chains.

It localises to the cell inner membrane. In terms of biological role, f(1)F(0) ATP synthase produces ATP from ADP in the presence of a proton or sodium gradient. F-type ATPases consist of two structural domains, F(1) containing the extramembraneous catalytic core and F(0) containing the membrane proton channel, linked together by a central stalk and a peripheral stalk. During catalysis, ATP synthesis in the catalytic domain of F(1) is coupled via a rotary mechanism of the central stalk subunits to proton translocation. This protein is part of the stalk that links CF(0) to CF(1). It either transmits conformational changes from CF(0) to CF(1) or is implicated in proton conduction. This chain is ATP synthase subunit delta, found in Hyphomonas neptunium (strain ATCC 15444).